Reading from the N-terminus, the 634-residue chain is MATEISTRGRQRAIGHEEYSLYSSLSEEELLQMAIEQSLADKTRGPTPAEASASSQTNHQPGHFHPWTRSPSSPENPPARAPLGLFQGVMQKYSSNLFKTSQMAAMDPVLKAIKEGDEEALKIMIQDGKNLAEPNKEGWLPLHEAAYYGQLGCLKVLQQAYPGTIDQRTLQEETALYLATCREHLDCLLSLLQAGAEPDISNKSRETPLYKACERKNAEAVRILVRYNADANHRCNRGWTALHESVSRNDLEVMEILVSGGAKVEAKNVYSITPLFVAAQSGQLEALRFLAKHGADINTQASDSASALYEASKNEHEDVVEFLLSQGADANKANKDGLLPLHVASKKGNYRIVQMLLPVTSRTRVRRSGISPLHLAAERNHDAVLEALLAARFDVNAPLAPERARLYEDRRSSALYFAVVNNNVYATELLLLAGADPNRDVISPLLVAIRHGCLRTMQLLLDHGANIDAYIATHPTAFPATIMFAMKCLSLLKFLMDLGCDGEPCFSCLYGNGPHPPAPRPGRFHDAPVDDKAPSVVQFCEFLSAPEVSRWAGPIIDVLLDYVGNVQLCSRLKEHIDSFEDWAVIKEKAEPPRPLAHLCRLRVRKAIGKYRIKLLDTLPLPGRLIRYLKYENTQ.

Residues 26–45 enclose the UIM domain; sequence SEEELLQMAIEQSLADKTRG. Positions 36 to 82 are disordered; the sequence is EQSLADKTRGPTPAEASASSQTNHQPGHFHPWTRSPSSPENPPARAP. 12 ANK repeats span residues 104-133, 137-167, 171-200, 204-233, 237-266, 270-299, 303-332, 336-365, 368-397, 410-439, 440-469, and 476-504; these read AAMDPVLKAIKEGDEEALKIMIQDGKNLAE, EGWLPLHEAAYYGQLGCLKVLQQAYPGTIDQ, QEETALYLATCREHLDCLLSLLQAGAEPDI, SRETPLYKACERKNAEAVRILVRYNADANH, RGWTALHESVSRNDLEVMEILVSGGAKVEA, YSITPLFVAAQSGQLEALRFLAKHGADINT, DSASALYEASKNEHEDVVEFLLSQGADANK, DGLLPLHVASKKGNYRIVQMLLPVTSRTRV, SGISPLHLAAERNHDAVLEALLAARFDVNA, RRSSALYFAVVNNNVYATELLLLAGADPNR, DVISPLLVAIRHGCLRTMQLLLDHGANIDA, and TAFPATIMFAMKCLSLLKFLMDLGCDGEP. A Phosphoserine modification is found at serine 371. The SOCS box domain occupies 580–634; that stretch reads EDWAVIKEKAEPPRPLAHLCRLRVRKAIGKYRIKLLDTLPLPGRLIRYLKYENTQ.

The protein belongs to the ankyrin SOCS box (ASB) family. Component of a probable ECS E3 ubiquitin-protein ligase complex which contains CUL5, either RBX1 or RNF7/RBX2, Elongin BC complex (ELOB and ELOC) and ASB2. Interacts with SKP2. Through its interaction with SKP2, likely to bridge the formation of dimeric E3-ubiquitin-protein ligase complexes composed of an ECS complex and an SCF(SKP2) complex. Interacts with JAK2; the interaction targets JAK2 for Notch-mediated proteasomal degradation. Interacts with TCF3/E2A; the interaction is mediated by SKP2 and targets TCF3 for Notch-mediated proteasomal degradation. In terms of assembly, interacts with DES. In terms of processing, monoubiquitinated. Post-translationally, not monoubiquitinated. Phosphorylation at Ser-371 is required for association with FLNA and subsequent FLNA degradation. In terms of tissue distribution, highest expression in muscle, heart and spleen. Highly expressed in cells of the first and second heart fields in the developing embryonic heart. At 9.5 dpc, robust expression predominantly in the left and right ventricles (RV) and to a lower extent in inflow and outflow tracts. At 10.5 and 11.5 dpc, expression is restricted to the myocardium with no expression observed in the endocardium. Not expressed in immature dendritic cells. Highly expressed in adult skeletal muscle with very low levels in adult bone marrow. As to expression, expressed in immature dendritic cells and in primary dendritic cells derived from the spleen. Highly expressed in adult bone marrow with negligible levels in adult skeletal muscle. Expressed at higher levels in T helper type 2 (Th2) cells than in regulatory T (Treg) cells, type 1 helper T (Th1) cells and T helper 17 (Th17) cells.

The protein resides in the cytoplasm. It localises to the cytoskeleton. Its subcellular location is the stress fiber. The protein localises to the myofibril. It is found in the sarcomere. The protein resides in the z line. It functions in the pathway protein modification; protein ubiquitination. In terms of biological role, substrate-recognition component of a SCF-like ECS (Elongin-Cullin-SOCS-box protein) E3 ubiquitin-protein ligase complex which mediates the ubiquitination and subsequent proteasomal degradation of target proteins. Mediates Notch-induced ubiquitination and degradation of substrates including TCF3/E2A and JAK2. Required during embryonic heart development for complete heart looping. Required for cardiomyocyte differentiation. Specifically promotes the ubiquitination of SMAD9 and targets it for proteasomal degradation, leading to avoid excessive accumulation of SMAD9. Plays a role in the regulation of NK-cell migration by modulating protein levels of filamin A/FLNA via regulation of its ubiquitination and proteasome degradation. Involved in myogenic differentiation and targets filamin FLNB for proteasomal degradation but not filamin FLNA. Also targets DES for proteasomal degradation. Acts as a negative regulator of skeletal muscle mass. Its function is as follows. Targets filamins FLNA and FLNB for proteasomal degradation. This leads to enhanced adhesion of hematopoietic cells to fibronectin. Required for FLNA degradation in immature cardiomyocytes which is necessary for actin cytoskeleton remodeling, leading to proper organization of myofibrils and function of mature cardiomyocytes. Required for degradation of FLNA and FLNB in immature dendritic cells (DC) which enhances immature DC migration by promoting DC podosome formation and DC-mediated degradation of the extracellular matrix. Does not promote proteasomal degradation of tyrosine-protein kinases JAK1 or JAK2 in hematopoietic cells. The polypeptide is Ankyrin repeat and SOCS box protein 2 (Mus musculus (Mouse)).